The chain runs to 207 residues: Ribosomal RNA small subunit methyltransferase G (207 aa).

Residues glycine 71, phenylalanine 76, 122 to 123 (AE), and arginine 135 each bind S-adenosyl-L-methionine.

Belongs to the methyltransferase superfamily. RNA methyltransferase RsmG family.

The protein resides in the cytoplasm. Its function is as follows. Specifically methylates the N7 position of a guanine in 16S rRNA. The protein is Ribosomal RNA small subunit methyltransferase G of Cytophaga hutchinsonii (strain ATCC 33406 / DSM 1761 / CIP 103989 / NBRC 15051 / NCIMB 9469 / D465).